The sequence spans 208 residues: Outer-membrane lipoprotein LolB (208 aa).

A signal peptide spans 1-23 (MKPIQKLSLFRLLPLSCVLLLTA). Residue Cys24 is the site of N-palmitoyl cysteine attachment. The S-diacylglycerol cysteine moiety is linked to residue Cys24.

It belongs to the LolB family. Monomer.

Its subcellular location is the cell outer membrane. Its function is as follows. Plays a critical role in the incorporation of lipoproteins in the outer membrane after they are released by the LolA protein. The protein is Outer-membrane lipoprotein LolB of Photorhabdus laumondii subsp. laumondii (strain DSM 15139 / CIP 105565 / TT01) (Photorhabdus luminescens subsp. laumondii).